A 156-amino-acid chain; its full sequence is Small ribosomal subunit protein uS7 (156 aa).

The protein belongs to the universal ribosomal protein uS7 family. Part of the 30S ribosomal subunit. Contacts proteins S9 and S11.

One of the primary rRNA binding proteins, it binds directly to 16S rRNA where it nucleates assembly of the head domain of the 30S subunit. Is located at the subunit interface close to the decoding center, probably blocks exit of the E-site tRNA. The sequence is that of Small ribosomal subunit protein uS7 from Synechococcus sp. (strain WH7803).